Here is a 280-residue protein sequence, read N- to C-terminus: Dolichyl-diphosphooligosaccharide--protein glycosyltransferase subunit 2 (280 aa).

An N-terminal signal peptide occupies residues 1–16; the sequence is MKLLLVLLTIASVALA. Residues 17–187 lie on the Lumenal side of the membrane; that stretch reads AVDDVAVNNF…FRQPEKRPSA (171 aa). The chain crosses the membrane as a helical span at residues 188–208; that stretch reads LISDLFTIICLSPLLILVVLW. The Cytoplasmic portion of the chain corresponds to 209–222; sequence SQVGINFQNAPASP. A helical membrane pass occupies residues 223–243; that stretch reads WVPIFHVGLIGIFGIYFMFWV. Glutamine 244 is a topological domain (lumenal). The helical transmembrane segment at 245–265 threads the bilayer; the sequence is FDMFVTLKYLAVLGFLTFVAG. At 266 to 280 the chain is on the cytoplasmic side; the sequence is NRVLRAISESKQKSE.

The protein belongs to the SWP1 family. Component of the oligosaccharyltransferase (OST) complex.

The protein resides in the endoplasmic reticulum membrane. It participates in protein modification; protein glycosylation. Subunit of the oligosaccharyl transferase (OST) complex that catalyzes the initial transfer of a defined glycan (Glc(3)Man(9)GlcNAc(2) in eukaryotes) from the lipid carrier dolichol-pyrophosphate to an asparagine residue within an Asn-X-Ser/Thr consensus motif in nascent polypeptide chains, the first step in protein N-glycosylation. N-glycosylation occurs cotranslationally and the complex associates with the Sec61 complex at the channel-forming translocon complex that mediates protein translocation across the endoplasmic reticulum (ER). All subunits are required for a maximal enzyme activity. This Caenorhabditis elegans protein is Dolichyl-diphosphooligosaccharide--protein glycosyltransferase subunit 2.